Here is a 62-residue protein sequence, read N- to C-terminus: uncharacterized protein (62 aa).

Residues 15–37 form a helical membrane-spanning segment; it reads FSSGVLISNFLLFNFIIISHSSL. The span at 41–56 shows a compositional bias: low complexity; sequence TTTTTTTTTTTTNTKS. Residues 41 to 62 form a disordered region; that stretch reads TTTTTTTTTTTTNTKSTLHRSG.

The protein resides in the membrane. This is an uncharacterized protein from Dictyostelium discoideum (Social amoeba).